The chain runs to 239 residues: Myogenic factor 6 (239 aa).

Residues 28-64 are disordered; the sequence is HLDMSGVSPLYNGNDSPLSPGQDNVPSETGGESSGDE. The span at 38 to 58 shows a compositional bias: polar residues; it reads YNGNDSPLSPGQDNVPSETGG. Positions 96–147 constitute a bHLH domain; it reads DRRKAATLRERRRLKKINEAFDALKRKTVANPNQRLPKVEILRSAISYIERL. Positions 155-189 are disordered; that stretch reads DEQERSQSGASDTRNDKEQNRPSGGDYRWKKASNT.

As to quaternary structure, efficient DNA binding requires dimerization with another bHLH protein.

Its subcellular location is the nucleus. Involved in muscle differentiation (myogenic factor). Induces fibroblasts to differentiate into myoblasts. Probable sequence specific DNA-binding protein. The protein is Myogenic factor 6 (myf6) of Takifugu rubripes (Japanese pufferfish).